Reading from the N-terminus, the 531-residue chain is Basal body-orientation factor 1 (531 aa).

A compositionally biased stretch (basic residues) spans 1 to 19 (MPKLKVKAGKGKKGKRKKA). The interval 1-32 (MPKLKVKAGKGKKGKRKKAGKNEHRLDKESEV) is disordered. Residues 20-32 (GKNEHRLDKESEV) are compositionally biased toward basic and acidic residues. 2 coiled-coil regions span residues 26–213 (LDKE…AEKA) and 274–365 (VQEK…VESF). Positions 465 to 505 (QSRKSPGLKPSPPADVSSIKEKEINTSNLEEKPEESSSTFI) are disordered. Basic and acidic residues predominate over residues 482–499 (SIKEKEINTSNLEEKPEE).

The protein belongs to the BBOF1 family. In terms of tissue distribution, multiciliated cells.

It is found in the cytoplasm. Its subcellular location is the cytoskeleton. The protein localises to the cilium basal body. Its function is as follows. Basal body protein required in multiciliate cells to align and maintain cilia orientation in response to flow. May act by mediating a maturation step that stabilizes and aligns cilia orientation. Not required to respond to planar cell polarity (PCP) or flow-based orientation cues. The chain is Basal body-orientation factor 1 (ccdc176) from Xenopus laevis (African clawed frog).